The chain runs to 420 residues: Glucose-1-phosphate adenylyltransferase (420 aa).

Alpha-D-glucose 1-phosphate contacts are provided by residues tyrosine 107, glycine 172, 187-188 (EK), and serine 205.

Belongs to the bacterial/plant glucose-1-phosphate adenylyltransferase family. As to quaternary structure, homotetramer.

The catalysed reaction is alpha-D-glucose 1-phosphate + ATP + H(+) = ADP-alpha-D-glucose + diphosphate. It functions in the pathway glycan biosynthesis; glycogen biosynthesis. Involved in the biosynthesis of ADP-glucose, a building block required for the elongation reactions to produce glycogen. Catalyzes the reaction between ATP and alpha-D-glucose 1-phosphate (G1P) to produce pyrophosphate and ADP-Glc. The sequence is that of Glucose-1-phosphate adenylyltransferase from Rhizobium rhizogenes (strain K84 / ATCC BAA-868) (Agrobacterium radiobacter).